Consider the following 106-residue polypeptide: NADH dehydrogenase [ubiquinone] iron-sulfur protein 5 (106 aa).

The 45-residue stretch at 30–74 folds into the CHCH domain; that stretch reads APRCHAFEKEWIECAHGIGAIRAEKECKIEYDDFIECLLRQKTMR. Short sequence motifs (cx9C motif) lie at residues 33–43 and 56–66; these read CHAFEKEWIEC and CKIEYDDFIEC. Disulfide bonds link cysteine 33–cysteine 66 and cysteine 43–cysteine 56. The interval 87–106 is disordered; that stretch reads IKEGKYTPPPHHIGKGEPRP.

Belongs to the complex I NDUFS5 subunit family. Mammalian complex I is composed of 45 different subunits. This is a component of the iron-sulfur (IP) fragment of the enzyme.

Its subcellular location is the mitochondrion inner membrane. The protein localises to the mitochondrion intermembrane space. In terms of biological role, accessory subunit of the mitochondrial membrane respiratory chain NADH dehydrogenase (Complex I), that is believed not to be involved in catalysis. Complex I functions in the transfer of electrons from NADH to the respiratory chain. The immediate electron acceptor for the enzyme is believed to be ubiquinone. This is NADH dehydrogenase [ubiquinone] iron-sulfur protein 5 (NDUFS5) from Macaca fascicularis (Crab-eating macaque).